A 477-amino-acid polypeptide reads, in one-letter code: ACT domain-containing protein ACR1 (477 aa).

ACT domains follow at residues 38 to 124, 134 to 214, 283 to 358, and 361 to 441; these read LIKV…REVQ, AFEI…GDVS, MVNV…RASQ, and KLEI…MMPR. Residues 329 to 345 carry the Bipartite nuclear localization signal motif; sequence KKNGGTLETEGQRERLR.

As to expression, expressed in flowers and siliques.

The protein localises to the nucleus. Functionally, may bind amino acids. The polypeptide is ACT domain-containing protein ACR1 (Arabidopsis thaliana (Mouse-ear cress)).